Reading from the N-terminus, the 427-residue chain is Glycophorin-binding protein-related antigen (427 aa).

8 GBP repeats span residues 109 to 149 (LTSA…DELE), 150 to 189 (TSAD…DEVE), 190 to 229 (SSAD…DELE), 230 to 269 (TSAD…EVET), 270 to 307 (SADP…SEVE), 308 to 347 (TSAD…DELE), 348 to 387 (TSAD…DELE), and 388 to 427 (TSAD…DESS).

The chain is Glycophorin-binding protein-related antigen (GBPH) from Plasmodium falciparum (isolate FCBR / Columbia).